A 206-amino-acid chain; its full sequence is Fibroblast growth factor 4 (206 aa).

The first 29 residues, 1–29, serve as a signal peptide directing secretion; the sequence is MAGPGTAAAALLPAVLLAVLAPWAGRGGA.

This sequence belongs to the heparin-binding growth factors family. Interacts with FGFR1, FGFR2, FGFR3 and FGFR4. Affinity between fibroblast growth factors (FGFs) and their receptors is increased by heparan sulfate glycosaminoglycans that function as coreceptors.

It localises to the secreted. Plays an important role in the regulation of embryonic development, cell proliferation, and cell differentiation. Required for normal limb and cardiac valve development during embryogenesis. May play a role in embryonic molar tooth bud development via inducing the expression of MSX1, MSX2 and MSX1-mediated expression of SDC1 in dental mesenchyme cells. The polypeptide is Fibroblast growth factor 4 (Bos taurus (Bovine)).